A 1457-amino-acid polypeptide reads, in one-letter code: DNA-directed RNA polymerase III subunit RPC1 (1457 aa).

Zn(2+) contacts are provided by C67, C70, C77, H80, C107, C110, and C154. The Mg(2+) site is built by D508, D510, and D512. The tract at residues 854–866 (PPEFLFHSISGRE) is bridging helix.

The protein belongs to the RNA polymerase beta' chain family. In terms of assembly, component of the RNA polymerase III (Pol III) complex consisting of 17 subunits.

It localises to the nucleus. The catalysed reaction is RNA(n) + a ribonucleoside 5'-triphosphate = RNA(n+1) + diphosphate. In terms of biological role, DNA-dependent RNA polymerase catalyzes the transcription of DNA into RNA using the four ribonucleoside triphosphates as substrates. Largest and catalytic core component of RNA polymerase III which synthesizes small RNAs, such as 5S rRNA and tRNAs. Forms the polymerase active center together with the second largest subunit. A single-stranded DNA template strand of the promoter is positioned within the central active site cleft of Pol III. A bridging helix emanates from RPC1 and crosses the cleft near the catalytic site and is thought to promote translocation of Pol III by acting as a ratchet that moves the RNA-DNA hybrid through the active site by switching from straight to bent conformations at each step of nucleotide addition. This chain is DNA-directed RNA polymerase III subunit RPC1 (RPC1), found in Debaryomyces hansenii (strain ATCC 36239 / CBS 767 / BCRC 21394 / JCM 1990 / NBRC 0083 / IGC 2968) (Yeast).